Reading from the N-terminus, the 182-residue chain is Protein GrpE (182 aa).

Residues methionine 1 to leucine 37 form a disordered region.

It belongs to the GrpE family. As to quaternary structure, homodimer.

The protein resides in the cytoplasm. Its function is as follows. Participates actively in the response to hyperosmotic and heat shock by preventing the aggregation of stress-denatured proteins, in association with DnaK and GrpE. It is the nucleotide exchange factor for DnaK and may function as a thermosensor. Unfolded proteins bind initially to DnaJ; upon interaction with the DnaJ-bound protein, DnaK hydrolyzes its bound ATP, resulting in the formation of a stable complex. GrpE releases ADP from DnaK; ATP binding to DnaK triggers the release of the substrate protein, thus completing the reaction cycle. Several rounds of ATP-dependent interactions between DnaJ, DnaK and GrpE are required for fully efficient folding. The chain is Protein GrpE from Wolbachia sp. subsp. Brugia malayi (strain TRS).